We begin with the raw amino-acid sequence, 323 residues long: MIRSVVRGIGSALPKRVMKNTDFEGIVETSDEWIVQRTGIRERHIAGEGETTVSLGAAAARAAIENAGLQPSDIDLVLLATSTPNNTFPASAVAIQRELGITRGFAFDLQAVCSGFIYAITTADLYIRGGMARRVLVIGAETFSRILDWTDRTTCVLFGDGAGAIVLEAAEGHGLTSDRGILAANLRSDGNHKEKLYVDGGPSTTQTVGHLRMEGREVFKHAVGMITDVIEASFEATGLTAEDIDWFVPHQANKRIIDASAKKLHIAEEKVVITVDRHGNTSAASVPLALATAVADGRIKKGDLVLLEAMGGGFTWGAVLVRW.

Catalysis depends on residues cysteine 113 and histidine 250. The segment at 251–255 is ACP-binding; that stretch reads QANKR. The active site involves asparagine 280.

This sequence belongs to the thiolase-like superfamily. FabH family. Homodimer.

The protein localises to the cytoplasm. The catalysed reaction is malonyl-[ACP] + acetyl-CoA + H(+) = 3-oxobutanoyl-[ACP] + CO2 + CoA. It participates in lipid metabolism; fatty acid biosynthesis. In terms of biological role, catalyzes the condensation reaction of fatty acid synthesis by the addition to an acyl acceptor of two carbons from malonyl-ACP. Catalyzes the first condensation reaction which initiates fatty acid synthesis and may therefore play a role in governing the total rate of fatty acid production. Possesses both acetoacetyl-ACP synthase and acetyl transacylase activities. Its substrate specificity determines the biosynthesis of branched-chain and/or straight-chain of fatty acids. The chain is Beta-ketoacyl-[acyl-carrier-protein] synthase III from Brucella abortus biovar 1 (strain 9-941).